We begin with the raw amino-acid sequence, 177 residues long: Acireductone dioxygenase (177 aa).

A disordered region spans residues 1–23 (MVRAWYMDDSDADQRAPHMTDPP). 4 residues coordinate Fe(2+): H86, H88, E92, and H131. 4 residues coordinate Ni(2+): H86, H88, E92, and H131.

Belongs to the acireductone dioxygenase (ARD) family. Requires Fe(2+) as cofactor. Ni(2+) is required as a cofactor.

The protein localises to the cytoplasm. It is found in the nucleus. The catalysed reaction is 1,2-dihydroxy-5-(methylsulfanyl)pent-1-en-3-one + O2 = 4-methylsulfanyl-2-oxobutanoate + formate + 2 H(+). The enzyme catalyses 1,2-dihydroxy-5-(methylsulfanyl)pent-1-en-3-one + O2 = 3-(methylsulfanyl)propanoate + CO + formate + 2 H(+). The protein operates within amino-acid biosynthesis; L-methionine biosynthesis via salvage pathway; L-methionine from S-methyl-5-thio-alpha-D-ribose 1-phosphate: step 5/6. Its function is as follows. Catalyzes 2 different reactions between oxygen and the acireductone 1,2-dihydroxy-3-keto-5-methylthiopentene (DHK-MTPene) depending upon the metal bound in the active site. Fe-containing acireductone dioxygenase (Fe-ARD) produces formate and 2-keto-4-methylthiobutyrate (KMTB), the alpha-ketoacid precursor of methionine in the methionine recycle pathway. Ni-containing acireductone dioxygenase (Ni-ARD) produces methylthiopropionate, carbon monoxide and formate, and does not lie on the methionine recycle pathway. This chain is Acireductone dioxygenase, found in Branchiostoma floridae (Florida lancelet).